The following is a 232-amino-acid chain: Putative homeobox protein NANOG2 (232 aa).

Residues 1-39 (MDLPIQDSHDSSTSPKGKQPTTAEKSATKKEDKVPVKKQ) form a disordered region. The span at 11-25 (SSTSPKGKQPTTAEK) shows a compositional bias: polar residues. Positions 26–35 (SATKKEDKVP) are enriched in basic and acidic residues. 8 consecutive repeat copies span residues 123–127 (WSNQT), 128–132 (WNNST), 133–137 (WSNQT), 143–147 (WSNHS), 148–152 (WNTQT), 153–157 (WCTQS), 158–162 (WNNQA), and 163–167 (WNSPF). The 8 X repeats starting with a Trp in each unit stretch occupies residues 123–167 (WSNQTWNNSTWSNQTQNIQSWSNHSWNTQTWCTQSWNNQAWNSPF). The tract at residues 123 to 167 (WSNQTWNNSTWSNQTQNIQSWSNHSWNTQTWCTQSWNNQAWNSPF) is sufficient for transactivation activity. The tract at residues 168-232 (YNCGEESLQS…YSMNMQPEDV (65 aa)) is sufficient for strong transactivation activity.

Belongs to the Nanog homeobox family.

It localises to the nucleus. Functionally, probable transcriptional regulator. This is Putative homeobox protein NANOG2 (NANOGP1) from Homo sapiens (Human).